The primary structure comprises 151 residues: UPF0098 protein MTH_273 (151 aa).

Belongs to the UPF0098 family.

The sequence is that of UPF0098 protein MTH_273 from Methanothermobacter thermautotrophicus (strain ATCC 29096 / DSM 1053 / JCM 10044 / NBRC 100330 / Delta H) (Methanobacterium thermoautotrophicum).